We begin with the raw amino-acid sequence, 249 residues long: Aliphatic sulfonates import ATP-binding protein SsuB 2 (249 aa).

In terms of domain architecture, ABC transporter spans 5 to 233; the sequence is LDLLEIRKAY…PRDRRAVELA (229 aa). 37–44 is an ATP binding site; that stretch reads GPSGCGKS.

The protein belongs to the ABC transporter superfamily. Aliphatic sulfonates importer (TC 3.A.1.17.2) family. As to quaternary structure, the complex is composed of two ATP-binding proteins (SsuB), two transmembrane proteins (SsuC) and a solute-binding protein (SsuA).

It is found in the cell inner membrane. The catalysed reaction is ATP + H2O + aliphatic sulfonate-[sulfonate-binding protein]Side 1 = ADP + phosphate + aliphatic sulfonateSide 2 + [sulfonate-binding protein]Side 1.. In terms of biological role, part of the ABC transporter complex SsuABC involved in aliphatic sulfonates import. Responsible for energy coupling to the transport system. The polypeptide is Aliphatic sulfonates import ATP-binding protein SsuB 2 (Pseudomonas aeruginosa (strain ATCC 15692 / DSM 22644 / CIP 104116 / JCM 14847 / LMG 12228 / 1C / PRS 101 / PAO1)).